The chain runs to 162 residues: Cyclic pyranopterin monophosphate synthase (162 aa).

Substrate is bound by residues 75-77 (LCH) and 113-114 (ME). Residue Asp-128 is part of the active site.

The protein belongs to the MoaC family. As to quaternary structure, homohexamer; trimer of dimers.

The catalysed reaction is (8S)-3',8-cyclo-7,8-dihydroguanosine 5'-triphosphate = cyclic pyranopterin phosphate + diphosphate. It functions in the pathway cofactor biosynthesis; molybdopterin biosynthesis. Its function is as follows. Catalyzes the conversion of (8S)-3',8-cyclo-7,8-dihydroguanosine 5'-triphosphate to cyclic pyranopterin monophosphate (cPMP). This chain is Cyclic pyranopterin monophosphate synthase, found in Klebsiella pneumoniae (strain 342).